Reading from the N-terminus, the 750-residue chain is 3-isopropylmalate dehydratase (750 aa).

Residues C353, C413, and C416 each coordinate [4Fe-4S] cluster. Residues 492–524 (KYDGSPEVFKSTQDTTPAVKPPQPASDSSSSGG) are disordered.

The protein belongs to the aconitase/IPM isomerase family. Monomer. It depends on [4Fe-4S] cluster as a cofactor.

It carries out the reaction (2R,3S)-3-isopropylmalate = (2S)-2-isopropylmalate. It functions in the pathway amino-acid biosynthesis; L-leucine biosynthesis; L-leucine from 3-methyl-2-oxobutanoate: step 2/4. In terms of biological role, catalyzes the isomerization between 2-isopropylmalate and 3-isopropylmalate, via the formation of 2-isopropylmaleate. In Rhizopus niveus, this protein is 3-isopropylmalate dehydratase (LEU1).